We begin with the raw amino-acid sequence, 769 residues long: P-selectin (769 aa).

Positions 1 to 32 (MASCPKAIWSWRFQRVVFRSVQLLCFSILIFE) are cleaved as a signal peptide. Residues 33 to 717 (LMTQKEVSAW…QEALTYIGGA (685 aa)) are Extracellular-facing. Asparagine 54 and asparagine 80 each carry an N-linked (GlcNAc...) asparagine glycan. Positions 58-158 (AFCQKYYTDL…PCGKRKRALC (101 aa)) constitute a C-type lectin domain. Disulfide bonds link cysteine 60–cysteine 158, cysteine 131–cysteine 150, cysteine 163–cysteine 174, cysteine 168–cysteine 183, cysteine 185–cysteine 194, cysteine 200–cysteine 244, cysteine 230–cysteine 257, cysteine 262–cysteine 306, cysteine 292–cysteine 319, cysteine 324–cysteine 368, cysteine 354–cysteine 381, cysteine 386–cysteine 430, cysteine 416–cysteine 443, cysteine 448–cysteine 492, cysteine 478–cysteine 505, cysteine 510–cysteine 554, cysteine 540–cysteine 567, cysteine 581–cysteine 625, cysteine 611–cysteine 638, cysteine 643–cysteine 687, and cysteine 673–cysteine 700. 3 residues coordinate Ca(2+): glutamate 121, asparagine 123, and asparagine 124. Residue asparagine 123 coordinates a carbohydrate. Residues glutamate 133 and asparagine 146 each contribute to the a carbohydrate site. Ca(2+) contacts are provided by asparagine 146 and aspartate 147. Residues 159–195 (YRASCQDMSCSKQGECIETIGNYTCSCYPGFYGPECE) enclose the EGF-like domain. N-linked (GlcNAc...) asparagine glycosylation is present at asparagine 180. Sushi domains follow at residues 198 to 259 (RECG…QCVA), 260 to 321 (VQCP…VCKA), 322 to 383 (IACE…VCQA), 384 to 445 (LQCQ…ECQA), 446 to 507 (VTCA…TCEA), 508 to 569 (SKCP…SCKV), 579 to 640 (LRCP…TCRA), and 641 to 702 (VKCS…TCQA). Asparagine 212 and asparagine 219 each carry an N-linked (GlcNAc...) asparagine glycan. N-linked (GlcNAc...) asparagine glycosylation occurs at asparagine 347. Asparagine 398 carries an N-linked (GlcNAc...) asparagine glycan. N-linked (GlcNAc...) asparagine glycosylation occurs at asparagine 604. Residues asparagine 655, asparagine 662, and asparagine 680 are each glycosylated (N-linked (GlcNAc...) asparagine). Residues 718 to 734 (AAGTTGLVTSSILLALL) traverse the membrane as a helical segment. Residues 735-769 (RRRRRQKDDGKSPLNPQSHLGTYGVFTNAAFDPSP) are Cytoplasmic-facing. Residues 740–769 (QKDDGKSPLNPQSHLGTYGVFTNAAFDPSP) form a disordered region. The short motif at 757–760 (YGVF) is the Endocytosis signal element. Residues 760–769 (FTNAAFDPSP) form an interaction with SNX17 region.

The protein belongs to the selectin/LECAM family. As to quaternary structure, interacts with SNX17. Interacts with SELPLG/PSGL1 and PODXL2 and mediates neutrophil adhesion and leukocyte rolling. This interaction requires the sialyl-Lewis X epitope of SELPLG and PODXL2, and specific tyrosine sulfation on SELPLG. Interacts (via C-type lectin domain) with alpha-IIb/beta3 integrin ITGA2B:ITGB3 and alpha-V/beta-3 integrin ITGAV:ITGB3. Interacts with alpha5/beta1 integrin ITGA5:ITGB1 and alpha4/beta1 integrin ITGA4:ITGB.

The protein localises to the cell membrane. Its function is as follows. Ca(2+)-dependent receptor for myeloid cells that binds to carbohydrates on neutrophils and monocytes. Mediates the interaction of activated endothelial cells or platelets with leukocytes. The ligand recognized is sialyl-Lewis X. Mediates rapid rolling of leukocyte rolling over vascular surfaces during the initial steps in inflammation through interaction with SELPLG. Mediates cell-cell interactions and cell adhesion via the interaction with integrin alpha-IIb/beta3 (ITGA2B:ITGB3) and integrin alpha-V/beta-3 (ITGAV:ITGB3). The protein is P-selectin (SELP) of Ovis aries (Sheep).